The sequence spans 869 residues: DNA mismatch repair protein MutS (869 aa).

619-626 (GPNMAGKS) serves as a coordination point for ATP.

The protein belongs to the DNA mismatch repair MutS family.

Its function is as follows. This protein is involved in the repair of mismatches in DNA. It is possible that it carries out the mismatch recognition step. This protein has a weak ATPase activity. The protein is DNA mismatch repair protein MutS of Caldanaerobacter subterraneus subsp. tengcongensis (strain DSM 15242 / JCM 11007 / NBRC 100824 / MB4) (Thermoanaerobacter tengcongensis).